The following is a 421-amino-acid chain: Testin (421 aa).

Residues Met92–Asp199 enclose the PET domain. Residues Lys134–Cys164 form a disordered region. Residues Pro155 to Cys164 show a composition bias toward basic and acidic residues. 3 consecutive LIM zinc-binding domains span residues Tyr234–Glu297, Pro299–Val359, and Gln362–Ser421.

The protein belongs to the prickle / espinas / testin family. As to quaternary structure, interacts via LIM domain 1 with ZYX. Interacts (via LIM domain 3) with ENAH and VASP. Interacts with ALKBH4, talin, actin, alpha-actinin, GRIP1 and PXN. Interacts (via LIM domain 2) with ACTL7A (via N-terminus). Heterodimer with ACTL7A; the heterodimer interacts with ENAH to form a heterotrimer.

The protein resides in the cytoplasm. The protein localises to the cell junction. It localises to the focal adhesion. In terms of biological role, scaffold protein that may play a role in cell adhesion, cell spreading and in the reorganization of the actin cytoskeleton. Plays a role in the regulation of cell proliferation. May act as a tumor suppressor. The protein is Testin (TES) of Eulemur macaco macaco (Black lemur).